Reading from the N-terminus, the 269-residue chain is Shikimate dehydrogenase (NADP(+)) (269 aa).

Shikimate-binding positions include 14–16 (SKS) and Thr61. The active-site Proton acceptor is Lys65. NADP(+) is bound at residue Glu77. Shikimate is bound by residues Asn86 and Asp102. Residues 126–130 (GAGGA), 149–154 (NRTLTK), and Met213 each bind NADP(+). Residue Tyr215 participates in shikimate binding. Gly238 contributes to the NADP(+) binding site.

It belongs to the shikimate dehydrogenase family. In terms of assembly, homodimer.

It carries out the reaction shikimate + NADP(+) = 3-dehydroshikimate + NADPH + H(+). It participates in metabolic intermediate biosynthesis; chorismate biosynthesis; chorismate from D-erythrose 4-phosphate and phosphoenolpyruvate: step 4/7. Its function is as follows. Involved in the biosynthesis of the chorismate, which leads to the biosynthesis of aromatic amino acids. Catalyzes the reversible NADPH linked reduction of 3-dehydroshikimate (DHSA) to yield shikimate (SA). This Actinobacillus succinogenes (strain ATCC 55618 / DSM 22257 / CCUG 43843 / 130Z) protein is Shikimate dehydrogenase (NADP(+)).